A 397-amino-acid chain; its full sequence is Putative 3'(2'),5'-bisphosphate nucleotidase, mitochondrial (397 aa).

The transit peptide at 1–16 (MYILDTGARFSAVRFS) directs the protein to the mitochondrion. Catalysis depends on Asp91, which acts as the Proton acceptor. Glu114, Asp174, Ile176, and Asp177 together coordinate Mg(2+). The active-site Proton acceptor is Thr179. Residues Thr179, Ser305, Lys308, and Asp334 each coordinate adenosine 3',5'-bisphosphate. AMP is bound by residues Ser305, Lys308, and Asp334. Asp334 contributes to the Mg(2+) binding site.

The protein belongs to the inositol monophosphatase superfamily. Requires Mg(2+) as cofactor.

The protein resides in the mitochondrion. The catalysed reaction is 3'-phosphoadenylyl sulfate + H2O = adenosine 5'-phosphosulfate + phosphate. It catalyses the reaction adenosine 3',5'-bisphosphate + H2O = AMP + phosphate. It carries out the reaction adenosine 2',5'-bisphosphate + H2O = AMP + phosphate. Functionally, phosphatase that converts adenosine 3'-phosphate 5'-phosphosulfate (PAPS) to adenosine 5'-phosphosulfate (APS) and 3'(2')-phosphoadenosine 5'-phosphate (PAP) to AMP. This Arabidopsis thaliana (Mouse-ear cress) protein is Putative 3'(2'),5'-bisphosphate nucleotidase, mitochondrial.